Here is a 247-residue protein sequence, read N- to C-terminus: tRNA (guanine-N(1)-)-methyltransferase (247 aa).

S-adenosyl-L-methionine contacts are provided by residues Gly-113 and 133-138; that span reads IGDFVM.

Belongs to the RNA methyltransferase TrmD family. Homodimer.

The protein localises to the cytoplasm. It carries out the reaction guanosine(37) in tRNA + S-adenosyl-L-methionine = N(1)-methylguanosine(37) in tRNA + S-adenosyl-L-homocysteine + H(+). In terms of biological role, specifically methylates guanosine-37 in various tRNAs. This chain is tRNA (guanine-N(1)-)-methyltransferase, found in Vibrio cholerae serotype O1 (strain ATCC 39541 / Classical Ogawa 395 / O395).